The following is a 343-amino-acid chain: LRP2-binding protein (343 aa).

Residues Ser58–Ala91 form a TPR repeat. Sel1-like repeat units lie at residues Leu92 to Ser124, Tyr132 to Asn167, Val172 to Ser205, Leu206 to Ser241, Val242 to Asp273, and Ala293 to Pro328.

The protein localises to the cytoplasm. Its function is as follows. May act as an adapter that regulates LRP2 function. This is LRP2-binding protein (lrp2bp) from Danio rerio (Zebrafish).